The primary structure comprises 39 residues: Decorsin (39 aa).

The high affinity binding domain stretch occupies residues 27–38 (CRFPRGDADPYC). Residues 31–33 (RGD) carry the Cell attachment site motif.

This sequence belongs to the ornatin family.

Its subcellular location is the secreted. In terms of biological role, inhibits fibrinogen interaction with platelet receptors expressed on glycoprotein IIb-IIIa complex. May prevent blood from clotting during either feeding and/or storage of ingested blood. In Macrobdella decora (North American leech), this protein is Decorsin.